The chain runs to 381 residues: Cytochrome b (381 aa).

4 consecutive transmembrane segments (helical) span residues 33–53 (FGSL…FLAM), 77–98 (WLIR…FLHV), 113–133 (WNIG…GYVL), and 178–198 (FFAL…VHLT). Positions 83 and 97 each coordinate heme b. Heme b-binding residues include His182 and His196. His201 lines the a ubiquinone pocket. The next 4 helical transmembrane spans lie at 226–246 (IKDI…ALFS), 288–308 (LGGV…PFLH), 320–340 (ISQT…WIGG), and 347–367 (FIII…HPMP).

This sequence belongs to the cytochrome b family. The cytochrome bc1 complex contains 11 subunits: 3 respiratory subunits (MT-CYB, CYC1 and UQCRFS1), 2 core proteins (UQCRC1 and UQCRC2) and 6 low-molecular weight proteins (UQCRH/QCR6, UQCRB/QCR7, UQCRQ/QCR8, UQCR10/QCR9, UQCR11/QCR10 and a cleavage product of UQCRFS1). This cytochrome bc1 complex then forms a dimer. Heme b is required as a cofactor.

It is found in the mitochondrion inner membrane. Functionally, component of the ubiquinol-cytochrome c reductase complex (complex III or cytochrome b-c1 complex) that is part of the mitochondrial respiratory chain. The b-c1 complex mediates electron transfer from ubiquinol to cytochrome c. Contributes to the generation of a proton gradient across the mitochondrial membrane that is then used for ATP synthesis. The polypeptide is Cytochrome b (MT-CYB) (Sminthopsis youngsoni (Lesser hairy-footed dunnart)).